A 185-amino-acid polypeptide reads, in one-letter code: C-type lectin domain family 5 member A (185 aa).

Over 1–4 (MNWH) the chain is Cytoplasmic. Residues 5 to 27 (MIISGLIVVVLKIVGMTFFLLYF) traverse the membrane as a helical; Signal-anchor for type II membrane protein segment. Topologically, residues 28-185 (PQIFGEHNVS…YRSICEKSAQ (158 aa)) are extracellular. N-linked (GlcNAc...) asparagine glycosylation is found at Asn-35 and Asn-55. Residues Cys-68 and Cys-79 are joined by a disulfide bond. One can recognise a C-type lectin domain in the interval 75–181 (HQGRCFFLST…CDVNYRSICE (107 aa)). N-linked (GlcNAc...) asparagine glycans are attached at residues Asn-90, Asn-117, Asn-141, and Asn-146. 2 disulfide bridges follow: Cys-96–Cys-180 and Cys-158–Cys-172.

In terms of assembly, monomer. Homodimer. The majority of CLEC5A is expressed as a monomeric form on macrophages. Interacts with TYROBP/DAP12. The interaction with TYROBP is required for CLEC5 cell surface expression. Interacts with HCST/DAP10. Forms a CLEC5A/TYROBP/HCST trimolecular complex depending almost solely on TYROBP. In terms of processing, N-glycosylated. Contains sialic acid residues. Constitutively expressed in monocytes and macrophages.

The protein resides in the cell membrane. In terms of biological role, functions as a positive regulator of osteoclastogenesis. Cell surface receptor that signals via TYROBP. Regulates inflammatory responses. The polypeptide is C-type lectin domain family 5 member A (CLEC5A) (Sus scrofa (Pig)).